A 118-amino-acid chain; its full sequence is MARIAGVNLPAQKHVWVGLQSIYGIGRTRSKKLCESAGVTSTTKIRDLSEPEIERLRAEVGKYVVEGDLRREIGIAIKRLMDLGCYRGLRHRRGHPLRGQRTRTNARTRKGPRKAIRK.

Residues Arg92 to Lys118 form a disordered region.

Belongs to the universal ribosomal protein uS13 family. In terms of assembly, part of the 30S ribosomal subunit. Forms a loose heterodimer with protein S19. Forms two bridges to the 50S subunit in the 70S ribosome.

Located at the top of the head of the 30S subunit, it contacts several helices of the 16S rRNA. In the 70S ribosome it contacts the 23S rRNA (bridge B1a) and protein L5 of the 50S subunit (bridge B1b), connecting the 2 subunits; these bridges are implicated in subunit movement. Contacts the tRNAs in the A and P-sites. The sequence is that of Small ribosomal subunit protein uS13 from Xanthomonas campestris pv. campestris (strain ATCC 33913 / DSM 3586 / NCPPB 528 / LMG 568 / P 25).